A 370-amino-acid chain; its full sequence is MTNANVDATPLTTKPSQDGFYMPAEWAAQQAVWMIWPHRPDNWRSAGAYAQATFAKVADAIGGATPVYMGVPKAFLAEAQKVMPSHVTLVEMDSNDCWARDTGPTVVINAEGECRGVDWGFNAWGGHNGGLYFPWDKDEQVAQQMLKQHGFARYSAPLILEGGSIHVDGEGTCMTSAECLLNANRNPDLTKEQIEDLLRDYLNVKQFIWLQDGVYMDETDGHIDNMCCFARPGEVILHWTDDEADPQYPRSKAALDVLQNTVDAQGRKLKIHLLPQPGPLYCTEEESLGVTEGTGVPRTAGERLAGSYVNFLITNHRIVFPLLDPTTDDIAAQKLQEIFPEYEIVGVPAREILLGGGNIHCITQQIPSGK.

The active-site Amidino-cysteine intermediate is the Cys361.

This sequence belongs to the agmatine deiminase family.

The enzyme catalyses agmatine + H2O = N-carbamoylputrescine + NH4(+). The polypeptide is Putative agmatine deiminase (Shewanella baltica (strain OS185)).